Reading from the N-terminus, the 207-residue chain is Protein FAM177A1 (207 aa).

M1 bears the N-acetylmethionine mark. S65 bears the Phosphoserine mark. Position 66 is a phosphothreonine (T66). Positions 131–170 (IDEYYRMKKEEEEEEEENRMSEEAERQYQQNKLQADSIVQ) form a coiled coil. Residues 142-176 (EEEEEENRMSEEAERQYQQNKLQADSIVQTDQPET) are disordered. Over residues 157-176 (QYQQNKLQADSIVQTDQPET) the composition is skewed to polar residues.

The protein belongs to the FAM177 family.

This is Protein FAM177A1 (Fam177a1) from Mus musculus (Mouse).